The primary structure comprises 242 residues: Guanylate kinase (242 aa).

The Guanylate kinase-like domain occupies 22–200 (GLLIVMTGAS…AVRELQAVQR (179 aa)). 29–36 (GASGVGKG) lines the ATP pocket.

It belongs to the guanylate kinase family.

It is found in the cytoplasm. The catalysed reaction is GMP + ATP = GDP + ADP. Its function is as follows. Essential for recycling GMP and indirectly, cGMP. The sequence is that of Guanylate kinase from Deinococcus geothermalis (strain DSM 11300 / CIP 105573 / AG-3a).